A 58-amino-acid chain; its full sequence is Succinate dehydrogenase subunit 8A, mitochondrial (58 aa).

Component of complex II composed of eight subunits in plants: four classical SDH subunits SDH1, SDH2, SDH3 and SDH4 (a flavoprotein (FP), an iron-sulfur protein (IP), and a cytochrome b composed of a large and a small subunit.), as well as four subunits unknown in mitochondria from bacteria and heterotrophic eukaryotes.

It is found in the mitochondrion inner membrane. It participates in carbohydrate metabolism; tricarboxylic acid cycle. The sequence is that of Succinate dehydrogenase subunit 8A, mitochondrial from Oryza sativa subsp. japonica (Rice).